A 389-amino-acid chain; its full sequence is PqqA peptide cyclase (389 aa).

Residues 20 to 235 (VGLPLWLLAE…TNEYRARLEA (216 aa)) enclose the Radical SAM core domain. [4Fe-4S] cluster contacts are provided by C34, C38, and C41.

This sequence belongs to the radical SAM superfamily. PqqE family. As to quaternary structure, interacts with PqqD. The interaction is necessary for activity of PqqE. [4Fe-4S] cluster serves as cofactor.

The catalysed reaction is [PQQ precursor protein] + S-adenosyl-L-methionine = E-Y cross-linked-[PQQ precursor protein] + 5'-deoxyadenosine + L-methionine + H(+). It participates in cofactor biosynthesis; pyrroloquinoline quinone biosynthesis. Catalyzes the cross-linking of a glutamate residue and a tyrosine residue in the PqqA protein as part of the biosynthesis of pyrroloquinoline quinone (PQQ). The sequence is that of PqqA peptide cyclase from Pseudomonas fluorescens (strain ATCC BAA-477 / NRRL B-23932 / Pf-5).